The chain runs to 584 residues: Insulin-like growth factor 2 mRNA-binding protein 3 (584 aa).

RRM domains lie at Asn-2–Pro-75 and Arg-81–Asp-156. Positions Ala-160 to Leu-199 are disordered. A compositionally biased stretch (polar residues) spans Ser-184–Gln-194. 4 KH domains span residues Asp-196 to Ile-261, Glu-277 to Ile-344, Ser-409 to Ile-474, and Lys-491 to Ile-557.

The protein belongs to the RRM IMP/VICKZ family. In terms of assembly, homodimer and multimer.

The protein resides in the cytoplasm. Its subcellular location is the nucleus. It is found in the P-body. It localises to the stress granule. Functionally, RNA-binding factor that may recruit target transcripts to cytoplasmic protein-RNA complexes (mRNPs). This transcript 'caging' into mRNPs allows mRNA transport and transient storage. It also modulates the rate and location at which target transcripts encounter the translational apparatus and shields them from endonuclease attacks or microRNA-mediated degradation. Preferentially binds to N6-methyladenosine (m6A)-containing mRNAs and increases their stability. This chain is Insulin-like growth factor 2 mRNA-binding protein 3 (IGF2BP3), found in Gallus gallus (Chicken).